The primary structure comprises 568 residues: Proline--tRNA ligase (568 aa).

Belongs to the class-II aminoacyl-tRNA synthetase family. ProS type 1 subfamily. As to quaternary structure, homodimer.

It localises to the cytoplasm. The enzyme catalyses tRNA(Pro) + L-proline + ATP = L-prolyl-tRNA(Pro) + AMP + diphosphate. Functionally, catalyzes the attachment of proline to tRNA(Pro) in a two-step reaction: proline is first activated by ATP to form Pro-AMP and then transferred to the acceptor end of tRNA(Pro). As ProRS can inadvertently accommodate and process non-cognate amino acids such as alanine and cysteine, to avoid such errors it has two additional distinct editing activities against alanine. One activity is designated as 'pretransfer' editing and involves the tRNA(Pro)-independent hydrolysis of activated Ala-AMP. The other activity is designated 'posttransfer' editing and involves deacylation of mischarged Ala-tRNA(Pro). The misacylated Cys-tRNA(Pro) is not edited by ProRS. The polypeptide is Proline--tRNA ligase (Macrococcus caseolyticus (strain JCSC5402) (Macrococcoides caseolyticum)).